Consider the following 297-residue polypeptide: MLRLGSHVSMSGKKMLLGASEEAASYGSNTFMIYTGAPQNTRRKPIEELNIEAGLEHMKAHDMADIVVHAPYIINIGNSVKPETFELGVNFLQSEIERTRALGAKQIVLHPGAHVGEGADKGIKQIIQGLNEALIHDQDVQIALETMAGKGSECGRTFEEIAQIIDGVTHNELLSVTFDTCHTHDAGYDIVNDFDGVLNEFDKIIGVDRLKVLHINDSKNECGAHKDRHANIGFGHIGFDALHYIVHHPQLADVPKILETPYVGEDKASKKAPYKWEIAMLRNGEFDPDLLNKIQNS.

Residues His-69, His-110, Glu-145, Asp-179, His-182, His-214, Asp-227, His-229, and Glu-259 each coordinate Zn(2+).

This sequence belongs to the AP endonuclease 2 family. Zn(2+) serves as cofactor.

It carries out the reaction Endonucleolytic cleavage to 5'-phosphooligonucleotide end-products.. In terms of biological role, endonuclease IV plays a role in DNA repair. It cleaves phosphodiester bonds at apurinic or apyrimidinic (AP) sites, generating a 3'-hydroxyl group and a 5'-terminal sugar phosphate. The chain is Probable endonuclease 4 from Listeria monocytogenes serotype 4b (strain CLIP80459).